Reading from the N-terminus, the 192-residue chain is Glycerol-3-phosphate acyltransferase (192 aa).

The next 5 membrane-spanning stretches (helical) occupy residues 4–24 (MFWL…AILL), 54–74 (LAIL…LIAS), 80–100 (IAQQ…PVYF), 112–132 (AGVL…AWLL), and 154–174 (LLAW…LLIV).

It belongs to the PlsY family. As to quaternary structure, probably interacts with PlsX.

Its subcellular location is the cell inner membrane. The catalysed reaction is an acyl phosphate + sn-glycerol 3-phosphate = a 1-acyl-sn-glycero-3-phosphate + phosphate. It participates in lipid metabolism; phospholipid metabolism. Functionally, catalyzes the transfer of an acyl group from acyl-phosphate (acyl-PO(4)) to glycerol-3-phosphate (G3P) to form lysophosphatidic acid (LPA). This enzyme utilizes acyl-phosphate as fatty acyl donor, but not acyl-CoA or acyl-ACP. The protein is Glycerol-3-phosphate acyltransferase of Pseudomonas syringae pv. syringae (strain B728a).